A 559-amino-acid chain; its full sequence is Urocanate hydratase (559 aa).

Residues 53–54, glutamine 131, 177–179, glutamate 197, arginine 202, 243–244, 264–268, 274–275, and tyrosine 323 contribute to the NAD(+) site; these read GG, GMG, NA, QTSAH, and YL. Residue cysteine 411 is part of the active site. Glycine 493 serves as a coordination point for NAD(+).

The protein belongs to the urocanase family. Requires NAD(+) as cofactor.

The protein localises to the cytoplasm. It carries out the reaction 4-imidazolone-5-propanoate = trans-urocanate + H2O. Its pathway is amino-acid degradation; L-histidine degradation into L-glutamate; N-formimidoyl-L-glutamate from L-histidine: step 2/3. Functionally, catalyzes the conversion of urocanate to 4-imidazolone-5-propionate. The protein is Urocanate hydratase of Pseudomonas aeruginosa (strain LESB58).